Consider the following 734-residue polypeptide: MAASPGPAGVGGAGAVYGSGSSGFALDSGLEIKTRSVEQTLLPLVSQITTLINHKDNTKKSDKTLQAIQRVGQAVNLAVGRFVKVGEAIANENWDLKEEINIACIEAKQAGETIAALTDITNLNHLESDGQITIFTDKTGVIKAARLLLSSVTKVLLLADRVVIKQIITSRNKVLATMERLEKVNSFQEFVQIFSQFGNEMVEFAHLSGDRQNDLKDEKKKAKMAAARAVLEKCTMMLLTASKTCLRHPNCESAHKNKEGVFDRMKVALDKVIEIVTDCKPNGETDISSISIFTGIKEFKMNIEALRENLYFQSKENLSVTLEVILERMEDFTDSAYTSHEHRERILELSTQARMELQQLISVWIQAQSKKTKSIAEELELSILKISHSLNELKKELHSTATQLAADLLKYHADHVVLKALKLTGVEGNLEALAEYACKLSEQKEQLVETCRLLRHISGTEPLEITCIHAEETFQVTGQQIISAAETLTLHPSSKIAKENLDVFCEAWESQISDMSTLLREINDVFEGRRGEKYGYLSLPKPMKNNANLKSLKPDKPDSEEQAKIAKLGLKLGLLTSDADCEIEKWEDQENEIVQYGRNMSSMAYSLYLFTRGEGPLKTSQDLIHQLEVFAAEGLKLTSSVQAFSKQLKDDDKLMLLLEINKLIPLCHQLQTVTKTSLQNKVFLKVDKCITKTRSMMALLVQLLSLCYKLLKKLQMENNGWVSVTNKDTMDSKT.

A phosphoserine mark is found at serine 374 and serine 538.

It belongs to the vinculin/alpha-catenin family. Interacts with ARHGEF1. Interacts with DTNA. The interaction is required for correct localization of both CTNL1 and DTNA. In terms of tissue distribution, widely expressed. Expressed at lower level in neural tissues and at the highest level in the adrenal gland.

It is found in the cytoplasm. The protein localises to the cytoskeleton. It localises to the cell membrane. Functionally, may modulate the Rho pathway signaling by providing a scaffold for the Lbc Rho guanine nucleotide exchange factor (ARHGEF1). The chain is Alpha-catulin (CTNNAL1) from Homo sapiens (Human).